The chain runs to 497 residues: Aldehyde dehydrogenase (497 aa).

NAD(+) is bound at residue 241–246 (GSTVVG). E264 serves as the catalytic Proton acceptor. The active-site Nucleophile is C298.

This sequence belongs to the aldehyde dehydrogenase family.

The protein resides in the cytoplasm. It catalyses the reaction an aldehyde + NAD(+) + H2O = a carboxylate + NADH + 2 H(+). It functions in the pathway alcohol metabolism; ethanol degradation; acetate from ethanol: step 2/2. The protein is Aldehyde dehydrogenase (ALTA10) of Alternaria alternata (Alternaria rot fungus).